The primary structure comprises 212 residues: ATP-dependent Clp protease proteolytic subunit (212 aa).

S112 acts as the Nucleophile in catalysis. H137 is an active-site residue.

It belongs to the peptidase S14 family. Fourteen ClpP subunits assemble into 2 heptameric rings which stack back to back to give a disk-like structure with a central cavity, resembling the structure of eukaryotic proteasomes.

The protein localises to the cytoplasm. The catalysed reaction is Hydrolysis of proteins to small peptides in the presence of ATP and magnesium. alpha-casein is the usual test substrate. In the absence of ATP, only oligopeptides shorter than five residues are hydrolyzed (such as succinyl-Leu-Tyr-|-NHMec, and Leu-Tyr-Leu-|-Tyr-Trp, in which cleavage of the -Tyr-|-Leu- and -Tyr-|-Trp bonds also occurs).. Its function is as follows. Cleaves peptides in various proteins in a process that requires ATP hydrolysis. Has a chymotrypsin-like activity. Plays a major role in the degradation of misfolded proteins. In Thiobacillus denitrificans (strain ATCC 25259 / T1), this protein is ATP-dependent Clp protease proteolytic subunit.